Reading from the N-terminus, the 690-residue chain is UvrABC system protein C (690 aa).

The GIY-YIG domain occupies 15–94; sequence TDPGVYTFRD…IKRFNPRFNV (80 aa). The UVR domain maps to 207-242; that stretch reads EPVLRRVRKEMEQASENLDFERAASLRDQLQAMQKS.

It belongs to the UvrC family. As to quaternary structure, interacts with UvrB in an incision complex.

It localises to the cytoplasm. Functionally, the UvrABC repair system catalyzes the recognition and processing of DNA lesions. UvrC both incises the 5' and 3' sides of the lesion. The N-terminal half is responsible for the 3' incision and the C-terminal half is responsible for the 5' incision. In Corynebacterium jeikeium (strain K411), this protein is UvrABC system protein C.